A 129-amino-acid chain; its full sequence is UPF0102 protein Cpar_0015 (129 aa).

This sequence belongs to the UPF0102 family.

In Chlorobaculum parvum (strain DSM 263 / NCIMB 8327) (Chlorobium vibrioforme subsp. thiosulfatophilum), this protein is UPF0102 protein Cpar_0015.